The primary structure comprises 344 residues: Tryptophan--tRNA ligase (344 aa).

Residues 20 to 22 (QPS) and 28 to 29 (GN) each bind ATP. The short motif at 21 to 29 (PSGALHLGN) is the 'HIGH' region element. Asp144 provides a ligand contact to L-tryptophan. Residues 156–158 (GED), Val197, and 206–210 (KMSKS) each bind ATP. Positions 206 to 210 (KMSKS) match the 'KMSKS' region motif.

Belongs to the class-I aminoacyl-tRNA synthetase family. Homodimer.

It is found in the cytoplasm. The enzyme catalyses tRNA(Trp) + L-tryptophan + ATP = L-tryptophyl-tRNA(Trp) + AMP + diphosphate + H(+). Catalyzes the attachment of tryptophan to tRNA(Trp). The chain is Tryptophan--tRNA ligase from Caulobacter vibrioides (strain ATCC 19089 / CIP 103742 / CB 15) (Caulobacter crescentus).